Consider the following 365-residue polypeptide: Tetratricopeptide repeat protein 19, mitochondrial (365 aa).

The N-terminal 52 residues, 1–52 (MFRLLRWRLGRTLLRAAGRRCGGCTARLLPERTGDAGTGAERLRTRGAPARG), are a transit peptide targeting the mitochondrion. TPR repeat units follow at residues 127-160 (TYTY…LLGG), 220-260 (ANTY…CQEI), 269-302 (IVLM…AREI), and 308-341 (HMVL…AELK).

The protein belongs to the TTC19 family. In terms of assembly, binds to the mature mitochondrial complex III dimer, after the incorporation of the Rieske protein UQCRFS1. Interacts with UQCRC1 and UQCRFS1. Interacts with ZFYVE26 and CHMP4B. In terms of processing, proteolytically cleaved by PARL.

It localises to the mitochondrion inner membrane. Required for the preservation of the structural and functional integrity of mitochondrial respiratory complex III by allowing the physiological turnover of the Rieske protein UQCRFS1. Involved in the clearance of UQCRFS1 N-terminal fragments, which are produced upon incorporation into the complex III and whose presence is detrimental for its catalytic activity. In Mus musculus (Mouse), this protein is Tetratricopeptide repeat protein 19, mitochondrial (Ttc19).